A 388-amino-acid polypeptide reads, in one-letter code: FMRFamide neuropeptides (388 aa).

An N-terminal signal peptide occupies residues 1–21 (MVAPLLVFLFSLQLCHTTSWA). A propeptide spanning residues 22–172 (YVGGNSLNSN…SNHQVIRDSR (151 aa)) is cleaved from the precursor. The interval 40 to 74 (FPAGTSNEVPEDAANGQDDNDDSQLTEPNDNNAPL) is disordered. Positions 64–74 (LTEPNDNNAPL) are enriched in polar residues. Residues phenylalanine 179, phenylalanine 196, phenylalanine 208, phenylalanine 219, phenylalanine 230, phenylalanine 241, phenylalanine 253, phenylalanine 265, phenylalanine 277, phenylalanine 289, phenylalanine 301, phenylalanine 313, phenylalanine 325, phenylalanine 337, phenylalanine 346, phenylalanine 359, and phenylalanine 372 each carry the phenylalanine amide modification. Positions 360–388 (GRTPTQSSDFMRFGKSLDKSENKTSDLQK) are disordered. The segment covering 374–388 (KSLDKSENKTSDLQK) has biased composition (basic and acidic residues). Residues 375 to 388 (SLDKSENKTSDLQK) constitute a propeptide that is removed on maturation.

This sequence belongs to the FARP (FMRFamide related peptide) family. In terms of tissue distribution, in the brain, expressed in 2 large cells in the lateral neurons in each optic lobe, 2 slightly bigger cells on both sides of the tritocerebrum, around 14 small cells in the dorsal area, around 13 cells in the subesophageal ganglion, and in the central brain.

It is found in the secreted. This Musca domestica (House fly) protein is FMRFamide neuropeptides.